The sequence spans 139 residues: Ribosomal RNA large subunit methyltransferase H (139 aa).

S-adenosyl-L-methionine contacts are provided by residues L56, G88, and 107–112 (LSLMTF).

It belongs to the RNA methyltransferase RlmH family. As to quaternary structure, homodimer.

Its subcellular location is the cytoplasm. The enzyme catalyses pseudouridine(1915) in 23S rRNA + S-adenosyl-L-methionine = N(3)-methylpseudouridine(1915) in 23S rRNA + S-adenosyl-L-homocysteine + H(+). Its function is as follows. Specifically methylates the pseudouridine at position 1915 (m3Psi1915) in 23S rRNA. The polypeptide is Ribosomal RNA large subunit methyltransferase H (Coprothermobacter proteolyticus (strain ATCC 35245 / DSM 5265 / OCM 4 / BT)).